The following is a 109-amino-acid chain: Small ribosomal subunit protein uS17 (109 aa).

It belongs to the universal ribosomal protein uS17 family. In terms of assembly, part of the 30S ribosomal subunit.

Its function is as follows. One of the primary rRNA binding proteins, it binds specifically to the 5'-end of 16S ribosomal RNA. This Methanosarcina mazei (strain ATCC BAA-159 / DSM 3647 / Goe1 / Go1 / JCM 11833 / OCM 88) (Methanosarcina frisia) protein is Small ribosomal subunit protein uS17.